A 96-amino-acid polypeptide reads, in one-letter code: UPF0235 protein KPK_0722 (96 aa).

Belongs to the UPF0235 family.

In Klebsiella pneumoniae (strain 342), this protein is UPF0235 protein KPK_0722.